A 555-amino-acid polypeptide reads, in one-letter code: CTP synthase (555 aa).

Residues 1–279 form an amidoligase domain region; that stretch reads MATNRAKSST…DNYIIRRLNL (279 aa). CTP is bound at residue Ser-21. Position 21 (Ser-21) interacts with UTP. Residues 22–27 and Asp-79 contribute to the ATP site; that span reads SLGKGL. Asp-79 and Glu-153 together coordinate Mg(2+). Residues 160–162, 200–205, and Lys-236 each bind CTP; these read DIE and KTKPTQ. UTP contacts are provided by residues 200–205 and Lys-236; that span reads KTKPTQ. The region spanning 304-553 is the Glutamine amidotransferase type-1 domain; it reads TIGIVGKYID…VDAALKHQAG (250 aa). Residue Gly-367 participates in L-glutamine binding. Cys-394 serves as the catalytic Nucleophile; for glutamine hydrolysis. L-glutamine is bound by residues 395–398, Glu-417, and Arg-478; that span reads LGLQ. Active-site residues include His-526 and Glu-528.

The protein belongs to the CTP synthase family. In terms of assembly, homotetramer.

The catalysed reaction is UTP + L-glutamine + ATP + H2O = CTP + L-glutamate + ADP + phosphate + 2 H(+). It catalyses the reaction L-glutamine + H2O = L-glutamate + NH4(+). The enzyme catalyses UTP + NH4(+) + ATP = CTP + ADP + phosphate + 2 H(+). It participates in pyrimidine metabolism; CTP biosynthesis via de novo pathway; CTP from UDP: step 2/2. Allosterically activated by GTP, when glutamine is the substrate; GTP has no effect on the reaction when ammonia is the substrate. The allosteric effector GTP functions by stabilizing the protein conformation that binds the tetrahedral intermediate(s) formed during glutamine hydrolysis. Inhibited by the product CTP, via allosteric rather than competitive inhibition. Functionally, catalyzes the ATP-dependent amination of UTP to CTP with either L-glutamine or ammonia as the source of nitrogen. Regulates intracellular CTP levels through interactions with the four ribonucleotide triphosphates. This is CTP synthase from Corynebacterium jeikeium (strain K411).